Consider the following 335-residue polypeptide: Beta-ketoacyl-[acyl-carrier-protein] synthase III 3 (335 aa).

Active-site residues include Cys-114 and His-256. Residues 257–261 (QANHR) are ACP-binding. The active site involves Asn-286.

It belongs to the thiolase-like superfamily. FabH family. Homodimer.

The protein localises to the cytoplasm. The enzyme catalyses malonyl-[ACP] + acetyl-CoA + H(+) = 3-oxobutanoyl-[ACP] + CO2 + CoA. It participates in lipid metabolism; fatty acid biosynthesis. Its function is as follows. Catalyzes the condensation reaction of fatty acid synthesis by the addition to an acyl acceptor of two carbons from malonyl-ACP. Catalyzes the first condensation reaction which initiates fatty acid synthesis and may therefore play a role in governing the total rate of fatty acid production. Possesses both acetoacetyl-ACP synthase and acetyl transacylase activities. Its substrate specificity determines the biosynthesis of branched-chain and/or straight-chain of fatty acids. In Streptomyces coelicolor (strain ATCC BAA-471 / A3(2) / M145), this protein is Beta-ketoacyl-[acyl-carrier-protein] synthase III 3.